A 343-amino-acid chain; its full sequence is Holliday junction branch migration complex subunit RuvB (343 aa).

The segment at 1-181 (MDRIIDSAAT…FGIVQRLEFY (181 aa)) is large ATPase domain (RuvB-L). ATP is bound by residues isoleucine 20, arginine 21, glycine 62, lysine 65, threonine 66, threonine 67, 128 to 130 (EDF), arginine 171, tyrosine 181, and arginine 218. Threonine 66 lines the Mg(2+) pocket. The tract at residues 182-252 (SPEDLARIVR…VAQAAMQMLK (71 aa)) is small ATPAse domain (RuvB-S). The head domain (RuvB-H) stretch occupies residues 255 to 343 (QGGFDELDRR…SAFTDPEDLF (89 aa)). DNA contacts are provided by arginine 291, arginine 310, and arginine 315.

It belongs to the RuvB family. In terms of assembly, homohexamer. Forms an RuvA(8)-RuvB(12)-Holliday junction (HJ) complex. HJ DNA is sandwiched between 2 RuvA tetramers; dsDNA enters through RuvA and exits via RuvB. An RuvB hexamer assembles on each DNA strand where it exits the tetramer. Each RuvB hexamer is contacted by two RuvA subunits (via domain III) on 2 adjacent RuvB subunits; this complex drives branch migration. In the full resolvosome a probable DNA-RuvA(4)-RuvB(12)-RuvC(2) complex forms which resolves the HJ.

Its subcellular location is the cytoplasm. The enzyme catalyses ATP + H2O = ADP + phosphate + H(+). Functionally, the RuvA-RuvB-RuvC complex processes Holliday junction (HJ) DNA during genetic recombination and DNA repair, while the RuvA-RuvB complex plays an important role in the rescue of blocked DNA replication forks via replication fork reversal (RFR). RuvA specifically binds to HJ cruciform DNA, conferring on it an open structure. The RuvB hexamer acts as an ATP-dependent pump, pulling dsDNA into and through the RuvAB complex. RuvB forms 2 homohexamers on either side of HJ DNA bound by 1 or 2 RuvA tetramers; 4 subunits per hexamer contact DNA at a time. Coordinated motions by a converter formed by DNA-disengaged RuvB subunits stimulates ATP hydrolysis and nucleotide exchange. Immobilization of the converter enables RuvB to convert the ATP-contained energy into a lever motion, pulling 2 nucleotides of DNA out of the RuvA tetramer per ATP hydrolyzed, thus driving DNA branch migration. The RuvB motors rotate together with the DNA substrate, which together with the progressing nucleotide cycle form the mechanistic basis for DNA recombination by continuous HJ branch migration. Branch migration allows RuvC to scan DNA until it finds its consensus sequence, where it cleaves and resolves cruciform DNA. In Xylella fastidiosa (strain Temecula1 / ATCC 700964), this protein is Holliday junction branch migration complex subunit RuvB.